The primary structure comprises 1253 residues: Methionine synthase (1253 aa).

In terms of domain architecture, Hcy-binding spans 6–326; sequence QDEIEAILRK…DHIREIAEAV (321 aa). Zn(2+) contacts are provided by Cys248, Cys311, and Cys312. A Pterin-binding domain is found at 359–620; the sequence is FVNIGERCNV…IHKDLLQLCE (262 aa). (6S)-5,6,7,8-tetrahydrofolate-binding positions include 370–372, Asp437, Asn458, Asp525, Asn567, Arg573, and Arg579; that span reads GSR. In terms of domain architecture, B12-binding N-terminal spans 650–747; that stretch reads QTDEWRNGSI…FMEKEREEAR (98 aa). Residues Glu697, 770-774, His773, Ser818, Thr822, and Ala874 each bind methylcob(III)alamin; that span reads GDVHD. Residues 760–895 form the B12-binding domain; sequence QGTIVLATVK…DENLRDDYFE (136 aa). The region spanning 911-1253 is the AdoMet activation domain; the sequence is SLKERKYVPL…LGPILGYDTD (343 aa). S-adenosyl-L-methionine contacts are provided by residues Asp962, Arg1160, and 1215–1216; that span reads YF. Phosphothreonine is present on Thr1252.

Belongs to the vitamin-B12 dependent methionine synthase family. In terms of assembly, monomer. Dimer. Forms a multiprotein complex with MMACHC, MMADHC and MTRR. It depends on methylcob(III)alamin as a cofactor. Requires Zn(2+) as cofactor.

Its subcellular location is the cytoplasm. It carries out the reaction (6S)-5-methyl-5,6,7,8-tetrahydrofolate + L-homocysteine = (6S)-5,6,7,8-tetrahydrofolate + L-methionine. Its pathway is amino-acid biosynthesis; L-methionine biosynthesis via de novo pathway; L-methionine from L-homocysteine (MetH route): step 1/1. Functionally, catalyzes the transfer of a methyl group from methylcob(III)alamin (MeCbl) to homocysteine, yielding enzyme-bound cob(I)alamin and methionine in the cytosol. MeCbl is an active form of cobalamin (vitamin B12) used as a cofactor for methionine biosynthesis. Cob(I)alamin form is regenerated to MeCbl by a transfer of a methyl group from 5-methyltetrahydrofolate. The processing of cobalamin in the cytosol occurs in a multiprotein complex composed of at least MMACHC, MMADHC, MTRR (methionine synthase reductase) and MTR which may contribute to shuttle safely and efficiently cobalamin towards MTR in order to produce methionine. In Mus musculus (Mouse), this protein is Methionine synthase.